Consider the following 951-residue polypeptide: Valine--tRNA ligase (951 aa).

A 'HIGH' region motif is present at residues 40–50 (PNVTGSLHMGH). The 'KMSKS' region motif lies at 551–555 (KMSKS). Lysine 554 provides a ligand contact to ATP. Residues 879 to 950 (MAGLIDVEAE…LLEQKAKIES (72 aa)) adopt a coiled-coil conformation.

The protein belongs to the class-I aminoacyl-tRNA synthetase family. ValS type 1 subfamily. As to quaternary structure, monomer.

It localises to the cytoplasm. It catalyses the reaction tRNA(Val) + L-valine + ATP = L-valyl-tRNA(Val) + AMP + diphosphate. Catalyzes the attachment of valine to tRNA(Val). As ValRS can inadvertently accommodate and process structurally similar amino acids such as threonine, to avoid such errors, it has a 'posttransfer' editing activity that hydrolyzes mischarged Thr-tRNA(Val) in a tRNA-dependent manner. The sequence is that of Valine--tRNA ligase from Pseudoalteromonas translucida (strain TAC 125).